We begin with the raw amino-acid sequence, 584 residues long: PE-PGRS family protein PE_PGRS11 (584 aa).

Positions 1–92 constitute a PE domain; sequence MSFVIVARDA…AATSYAVTEV (92 aa). The Tele-phosphohistidine intermediate role is filled by His290. The Proton donor/acceptor role is filled by Glu365. Residues 384 to 584 form a phosphoglycerate mutase region; sequence YLVGPIAWTL…LPIGLPSLIP (201 aa).

It in the N-terminal section; belongs to the mycobacterial PE family. PGRS subfamily. The protein in the C-terminal section; belongs to the phosphoglycerate mutase family. In terms of assembly, interacts with human TLR2. Mg(2+) is required as a cofactor.

The protein localises to the secreted. Its subcellular location is the cell wall. The protein resides in the cell surface. It catalyses the reaction (2R)-2-phosphoglycerate = (2R)-3-phosphoglycerate. Functionally, induces maturation and activation of human dendritic cells (DCs), via TLR2-dependent activation of ERK1/2, p38 MAPK, and NF-kappa-B signaling pathways, and enhances the ability of DCs to stimulate CD4(+) T cells. By activating DCs, could potentially contribute to the initiation of innate immune responses during tuberculosis infection and hence regulate the clinical course of tuberculosis. Involved in resistance to oxidative stress, via TLR2-dependent activation of the PI3K-ERK1/2-NF-kappa-B signaling pathway and expression of COX-2 and Bcl2. Also abolishes H(2)O(2)-triggered activation of p38 MAPK. The polypeptide is PE-PGRS family protein PE_PGRS11 (Mycobacterium tuberculosis (strain ATCC 25618 / H37Rv)).